The following is a 172-amino-acid chain: S-ribosylhomocysteine lyase (172 aa).

Residues His-54, His-58, and Cys-128 each coordinate Fe cation.

It belongs to the LuxS family. Homodimer. The cofactor is Fe cation.

It catalyses the reaction S-(5-deoxy-D-ribos-5-yl)-L-homocysteine = (S)-4,5-dihydroxypentane-2,3-dione + L-homocysteine. Functionally, involved in the synthesis of autoinducer 2 (AI-2) which is secreted by bacteria and is used to communicate both the cell density and the metabolic potential of the environment. The regulation of gene expression in response to changes in cell density is called quorum sensing. Catalyzes the transformation of S-ribosylhomocysteine (RHC) to homocysteine (HC) and 4,5-dihydroxy-2,3-pentadione (DPD). The protein is S-ribosylhomocysteine lyase of Vibrio alginolyticus.